A 243-amino-acid chain; its full sequence is Zinc import ATP-binding protein ZnuC (243 aa).

The ABC transporter domain maps to 4–219; that stretch reads ITVENLSVRY…PEYRALFGTG (216 aa). An ATP-binding site is contributed by 36–43; the sequence is GPNGSGKT.

Belongs to the ABC transporter superfamily. Zinc importer (TC 3.A.1.15.5) family. In terms of assembly, the complex is composed of two ATP-binding proteins (ZnuC), two transmembrane proteins (ZnuB) and a solute-binding protein (ZnuA).

It localises to the cell inner membrane. The catalysed reaction is Zn(2+)(out) + ATP(in) + H2O(in) = Zn(2+)(in) + ADP(in) + phosphate(in) + H(+)(in). Part of the ABC transporter complex ZnuABC involved in zinc import. Responsible for energy coupling to the transport system. The chain is Zinc import ATP-binding protein ZnuC from Jannaschia sp. (strain CCS1).